We begin with the raw amino-acid sequence, 217 residues long: UPF0502 protein Smlt0097 (217 aa).

This sequence belongs to the UPF0502 family.

The polypeptide is UPF0502 protein Smlt0097 (Stenotrophomonas maltophilia (strain K279a)).